Reading from the N-terminus, the 543-residue chain is Carboxypeptidase Y homolog A (543 aa).

Positions 1–17 are cleaved as a signal peptide; that stretch reads MRVLPATLLVGAATAAA. The propeptide occupies 18 to 124; that stretch reads PPFQQILGLP…KLEAYDLRVK (107 aa). 5 disulfide bridges follow: Cys-179/Cys-419, Cys-313/Cys-327, Cys-337/Cys-360, Cys-344/Cys-353, and Cys-382/Cys-389. N-linked (GlcNAc...) asparagine glycosylation occurs at Asn-210. Ser-266 is a catalytic residue. Asp-458 is a catalytic residue. A glycan (N-linked (GlcNAc...) asparagine) is linked at Asn-509. His-520 is an active-site residue.

This sequence belongs to the peptidase S10 family.

The protein resides in the vacuole. It carries out the reaction Release of a C-terminal amino acid with broad specificity.. In terms of biological role, vacuolar carboxypeptidase involved in degradation of small peptides. Digests preferentially peptides containing an aliphatic or hydrophobic residue in P1' position, as well as methionine, leucine or phenylalanine in P1 position of ester substrate. The chain is Carboxypeptidase Y homolog A (cpyA) from Neosartorya fischeri (strain ATCC 1020 / DSM 3700 / CBS 544.65 / FGSC A1164 / JCM 1740 / NRRL 181 / WB 181) (Aspergillus fischerianus).